The primary structure comprises 541 residues: Glucose-6-phosphate isomerase (541 aa).

Catalysis depends on Glu346, which acts as the Proton donor. Active-site residues include His377 and Lys506.

The protein belongs to the GPI family.

It localises to the cytoplasm. The catalysed reaction is alpha-D-glucose 6-phosphate = beta-D-fructose 6-phosphate. The protein operates within carbohydrate biosynthesis; gluconeogenesis. Its pathway is carbohydrate degradation; glycolysis; D-glyceraldehyde 3-phosphate and glycerone phosphate from D-glucose: step 2/4. Catalyzes the reversible isomerization of glucose-6-phosphate to fructose-6-phosphate. This is Glucose-6-phosphate isomerase from Rhizobium meliloti (strain 1021) (Ensifer meliloti).